Here is a 325-residue protein sequence, read N- to C-terminus: Tetraacyldisaccharide 4'-kinase (325 aa).

Residue Thr58 to Thr65 coordinates ATP.

This sequence belongs to the LpxK family.

The catalysed reaction is a lipid A disaccharide + ATP = a lipid IVA + ADP + H(+). Its pathway is glycolipid biosynthesis; lipid IV(A) biosynthesis; lipid IV(A) from (3R)-3-hydroxytetradecanoyl-[acyl-carrier-protein] and UDP-N-acetyl-alpha-D-glucosamine: step 6/6. In terms of biological role, transfers the gamma-phosphate of ATP to the 4'-position of a tetraacyldisaccharide 1-phosphate intermediate (termed DS-1-P) to form tetraacyldisaccharide 1,4'-bis-phosphate (lipid IVA). The chain is Tetraacyldisaccharide 4'-kinase from Coxiella burnetii (strain RSA 331 / Henzerling II).